Consider the following 377-residue polypeptide: Histone deacetylase 8 (377 aa).

The histone deacetylase stretch occupies residues 14 to 324; it reads LPPVYIYSPE…WTYLTGVILG (311 aa). S39 carries the phosphoserine modification. Substrate is bound at residue D101. The active-site Proton acceptor is H143. Position 151 (G151) interacts with substrate. Residues D178, H180, and D267 each coordinate a divalent metal cation. Substrate is bound at residue Y306.

The protein belongs to the histone deacetylase family. HD type 1 subfamily. As to quaternary structure, interacts with CBFA2T3. Interacts with phosphorylated SMG5/EST1B; this interaction protects SMG5 from ubiquitin-mediated degradation. Associates with alpha-SMA (smooth muscle alpha-actin). Requires a divalent metal cation as cofactor. Phosphorylated by PKA on serine 39. Phosphorylation reduces deacetylase activity observed preferentially on histones H3 and H4.

Its subcellular location is the nucleus. It is found in the chromosome. The protein resides in the cytoplasm. It catalyses the reaction N(6)-acetyl-L-lysyl-[histone] + H2O = L-lysyl-[histone] + acetate. It carries out the reaction N(6)-acetyl-L-lysyl-[protein] + H2O = L-lysyl-[protein] + acetate. The catalysed reaction is N(6)-(2E)-butenoyl-L-lysyl-[protein] + H2O = (2E)-2-butenoate + L-lysyl-[protein]. Its activity is regulated as follows. Its activity is inhibited by trichostatin A (TSA) and butyrate, 2 well known histone deacetylase inhibitors. Functionally, histone deacetylase that catalyzes the deacetylation of lysine residues on the N-terminal part of the core histones (H2A, H2B, H3 and H4). Histone deacetylation gives a tag for epigenetic repression and plays an important role in transcriptional regulation, cell cycle progression and developmental events. Histone deacetylases act via the formation of large multiprotein complexes. Also involved in the deacetylation of cohesin complex protein SMC3 regulating release of cohesin complexes from chromatin. May play a role in smooth muscle cell contractility. In addition to protein deacetylase activity, also has protein-lysine deacylase activity: acts as a protein decrotonylase by mediating decrotonylation ((2E)-butenoyl) of histones. The protein is Histone deacetylase 8 (Hdac8) of Rattus norvegicus (Rat).